The following is a 506-amino-acid chain: Glutamate--tRNA ligase (506 aa).

A 'HIGH' region motif is present at residues 12–22 (PSPTGDPHVGT). The short motif at 253–257 (KLSKR) is the 'KMSKS' region element. An ATP-binding site is contributed by K256.

It belongs to the class-I aminoacyl-tRNA synthetase family. Glutamate--tRNA ligase type 1 subfamily. As to quaternary structure, monomer.

The protein resides in the cytoplasm. It catalyses the reaction tRNA(Glu) + L-glutamate + ATP = L-glutamyl-tRNA(Glu) + AMP + diphosphate. Its function is as follows. Catalyzes the attachment of glutamate to tRNA(Glu) in a two-step reaction: glutamate is first activated by ATP to form Glu-AMP and then transferred to the acceptor end of tRNA(Glu). This Chlamydia trachomatis serovar L2 (strain ATCC VR-902B / DSM 19102 / 434/Bu) protein is Glutamate--tRNA ligase.